Consider the following 512-residue polypeptide: Cobyric acid synthase (512 aa).

The region spanning 262–442 (WLRVAAIRLP…WHGLLETDRF (181 aa)) is the GATase cobBQ-type domain. C343 functions as the Nucleophile in the catalytic mechanism. H434 is a catalytic residue.

The protein belongs to the CobB/CobQ family. CobQ subfamily.

Its pathway is cofactor biosynthesis; adenosylcobalamin biosynthesis. Catalyzes amidations at positions B, D, E, and G on adenosylcobyrinic A,C-diamide. NH(2) groups are provided by glutamine, and one molecule of ATP is hydrogenolyzed for each amidation. The chain is Cobyric acid synthase from Rhodococcus jostii (strain RHA1).